The chain runs to 412 residues: Proteasome-activating nucleotidase (412 aa).

Positions 18–72 form a coiled coil; the sequence is YRYLVDRVAGMESQNQELKEQIRQLESDKRYIETQKIRYEREVRKLKSEIEHLKT. Residues 197 to 202 and histidine 336 each bind ATP; that span reads GTGKTL. A docks into pockets in the proteasome alpha-ring to cause gate opening region spans residues 410-412; it reads MFA.

It belongs to the AAA ATPase family. Homohexamer. The hexameric complex has a two-ring architecture resembling a top hat that caps the 20S proteasome core at one or both ends. Upon ATP-binding, the C-terminus of PAN interacts with the alpha-rings of the proteasome core by binding to the intersubunit pockets.

It localises to the cytoplasm. ATPase which is responsible for recognizing, binding, unfolding and translocation of substrate proteins into the archaeal 20S proteasome core particle. Is essential for opening the gate of the 20S proteasome via an interaction with its C-terminus, thereby allowing substrate entry and access to the site of proteolysis. Thus, the C-termini of the proteasomal ATPase function like a 'key in a lock' to induce gate opening and therefore regulate proteolysis. Unfolding activity requires energy from ATP hydrolysis, whereas ATP binding alone promotes ATPase-20S proteasome association which triggers gate opening, and supports translocation of unfolded substrates. This Methanospirillum hungatei JF-1 (strain ATCC 27890 / DSM 864 / NBRC 100397 / JF-1) protein is Proteasome-activating nucleotidase.